Reading from the N-terminus, the 83-residue chain is Retinal cone rhodopsin-sensitive cGMP 3',5'-cyclic phosphodiesterase subunit gamma (83 aa).

Positions M1–T17 are enriched in polar residues. Positions M1 to P51 are disordered. Over residues G22–V43 the composition is skewed to basic residues.

Belongs to the rod/cone cGMP-PDE gamma subunit family. In terms of assembly, tetramer composed of two catalytic chains (alpha and beta), and two inhibitory chains (gamma).

It carries out the reaction 3',5'-cyclic GMP + H2O = GMP + H(+). Its function is as follows. Participates in processes of transmission and amplification of the visual signal. cGMP-PDEs are the effector molecules in G-protein-mediated phototransduction in vertebrate rods and cones. The chain is Retinal cone rhodopsin-sensitive cGMP 3',5'-cyclic phosphodiesterase subunit gamma (PDE6H) from Bos taurus (Bovine).